The following is a 3739-amino-acid chain: Cardiomyopathy-associated protein 5 (3739 aa).

13 disordered regions span residues 1–205 (MESG…PPIT), 268–814 (SLEP…SAFV), 835–884 (VSVS…AIQS), 967–1270 (LSED…SDVP), 1288–1313 (TQASLEPEAEDLVPPPTSGWEKRDAK), 1325–1637 (SSAL…NLVS), 1650–1969 (EMNR…EKGK), 1986–2016 (SSIPDSKVSDNEDLETRPGPSVEKAVPAIEP), 2065–2246 (FLSN…WETR), 2273–2318 (AVGE…LALD), 2377–2498 (VYPE…SAVE), 2513–2532 (KKQETWSDRPTVHTFQTSKD), and 2579–2616 (SADGVPPMGGTAQEPEGTSVKDEEFSVTSKPAGLSEDQ). The span at 18–47 (ADEEVAQELETEEESEGEGEETAAESEEEP) shows a compositional bias: acidic residues. Positions 48–62 (DARLSDEDEEGKTKQ) are enriched in basic and acidic residues. Polar residues predominate over residues 84-106 (TWETNSSRSSTPWASGESQTSGI). Residues 130–153 (RTRKRTQKSKRGSPSLRRKGSKKR) show a composition bias toward basic residues. Ser155 carries the phosphoserine modification. Polar residues-rich tracts occupy residues 156–175 (LESQDVLTNQEDGPSISESP) and 325–336 (ADSNLNVPSSTE). Positions 380 to 406 (ATMVLERAKEELEQNAQGKESSEDDAS) form a coiled coil. Composition is skewed to basic and acidic residues over residues 479 to 637 (IVHR…REEE), 644 to 663 (SIVHREEEHAPEPIVHREEE), and 670 to 730 (SIVH…ERGV). 2 repeat units span residues 482–493 (REEEHAPEPIVH) and 494–505 (REEEHAPEPIVH). A 20 X 12 AA approximate tandem repeats of R-[DE]-[EK]-[EG]-H-[AV]-P-E-[PS]-[IM]-V-[HLR] region spans residues 482-720 (REEEHAPEPI…EEHAPEPMVH (239 aa)). The stretch at 506–519 (REEEHAPEPESIVH) is one 3; approximate repeat. The stretch at 520–531 (REEEHAPESIVH) is repeat 4. Residues 532–545 (REEEHAPEPVPIVH) form a 5; approximate repeat. A 6; approximate repeat occupies 546–559 (REEEHAPEPESIVH). A run of 4 repeats spans residues 560-571 (REEEHAPEPIVH), 572-583 (RDKGHALEPIVH), 584-595 (REEEHAPEPIVH), and 596-607 (RDEGHAPEPIVH). The 11; approximate repeat unit spans residues 608–621 (REEEHVPEPESIVR). The stretch at 622 to 633 (KGEEHAPEPIVH) is one 12; approximate repeat. The stretch at 634–647 (REEEQVPEPESIVH) is one 14; approximate repeat. Copy 15 of the repeat occupies 648 to 659 (REEEHAPEPIVH). The 16; approximate repeat unit spans residues 660 to 673 (REEEQVPEPESIVH). Tandem repeats lie at residues 674-685 (REEEHAPEPMVL), 686-696 (REEHAPEPIVR), 697-708 (REEEHAPEPIVH), and 709-720 (REEEHAPEPMVH). The segment covering 740-756 (TEPEDSSLEEEIIELDY) has biased composition (acidic residues). Ser850 is modified (phosphoserine). Composition is skewed to polar residues over residues 861-884 (PAMTSVSEQSLSPSTTEKTSAIQS) and 1151-1161 (CLTSPSEQTVL). 2 stretches are compositionally biased toward basic and acidic residues: residues 1188–1197 (AETEQNKVEP) and 1230–1242 (EHSEPSQEREESS). Over residues 1337–1351 (TSVLPTSQPSVSPES) the composition is skewed to polar residues. Composition is skewed to basic and acidic residues over residues 1441–1460 (LEQRMLSKNEPEVAKPHSPP) and 1476–1486 (TEVKQESKITR). Over residues 1522-1540 (ASSSATTVPVTKLDSNSTK) the composition is skewed to polar residues. Basic and acidic residues-rich tracts occupy residues 1620 to 1631 (NDKHEEITRSPD), 1697 to 1706 (IDSRDRDRSL), 1726 to 1742 (GPAELQRRGKEQEENRK), 1760 to 1770 (IEQKEPKRTLH), 1786 to 1803 (DKPELGVKQLAEKKENLE), and 1836 to 1850 (EKPDGLVNQHEDRKP). Polar residues predominate over residues 1854–1863 (QLESSESTDL). Composition is skewed to basic and acidic residues over residues 1874–1885 (DTDHTSETRNQE), 1896–1916 (LSQEPRRVQSKAVDDSEEGRK), 1992–2001 (KVSDNEDLET), and 2153–2165 (ARKEEPSSDHKET). Positions 2181–2190 (KSAQSAFTRM) are enriched in polar residues. The residue at position 2192 (Ser2192) is a Phosphoserine. 5 stretches are compositionally biased toward basic and acidic residues: residues 2212 to 2244 (GEDRLRQEMPKPTSLEHCEEEVERPTEEKDGWE), 2279 to 2299 (RMPESRPFKLEESKAAERLEQ), 2306 to 2318 (KLMEKPSKTLALD), 2377 to 2419 (VYPE…ETDG), and 2429 to 2448 (ELEKSGESRVDLKEERRRFV). Ser2411 carries the phosphoserine modification. Ser2495 carries the post-translational modification Phosphoserine. Residues 2513-2523 (KKQETWSDRPT) are compositionally biased toward basic and acidic residues. A coiled-coil region spans residues 2640–2664 (SVDQEESEQMQDKLQYLEEKASFKS). Disordered stretches follow at residues 2667-2725 (VHDE…QPTV), 2742-2773 (LSPGSGKQKSTVEESSEEATKTLTSFPESSAE), 2791-2835 (GPEK…GMPL), 2881-2959 (EKNE…EREI), 3027-3047 (LESEPSSQGNEAGNASPDVNL), and 3111-3174 (PEEP…QKEP). The segment covering 2682 to 2709 (SKLEVPDRKITSLKENKTKETHKTKEEI) has biased composition (basic and acidic residues). The segment at 2731–3041 (YFEKYTLIDY…SSQGNEAGNA (311 aa)) is required for RYR2 clustering. Over residues 2762-2773 (KTLTSFPESSAE) the composition is skewed to polar residues. Composition is skewed to basic and acidic residues over residues 2791 to 2804 (GPEKDDSKLSHAEM) and 2812 to 2828 (KPDDRNAPKGISRDVDS). Position 2905 is a phosphoserine (Ser2905). Residues 2918 to 2929 (YILKDDILHDES) show a composition bias toward basic and acidic residues. The span at 3030–3047 (EPSSQGNEAGNASPDVNL) shows a compositional bias: polar residues. Positions 3153–3162 (VWDRTEDQSA) are enriched in basic and acidic residues. Positions 3187–3214 (KSLVSEMDKALDIHKDHEVSALDTAISA) are amphipathic helix H1. The B-box coiled-coil; BBC stretch occupies residues 3215 to 3342 (VKVQLGEFLE…ERLLSAMEST (128 aa)). A coiled-coil region spans residues 3244 to 3323 (FNTIEEKCSK…REAEELDETV (80 aa)). The segment at 3301–3318 (SMDTAKDTLETIVREAEE) is amphipathic helix H2. Fibronectin type-III domains lie at 3374–3475 (VPQP…TAPS) and 3476–3568 (TPVI…TRGT). The segment at 3421 to 3437 (EINELVEEYRLTVKESC) is amphipathic helix H3. The B30.2/SPRY domain maps to 3550 to 3735 (NASGTSEQSE…LHLGLEPPDS (186 aa)).

In terms of assembly, interacts with PRKAR2A. Interacts with ACTN2, DES and DTNBP1/dysbindin. Interacts with DMD/dystrophin. Interacts with the calcineurin catalytic subunit PPP3CA. Interacts with TTN. Interacts with CAPN3; this interaction, which results in CMYA5 proteolysis, may protect CAPN3 from autolysis. Interacts with FSD2. In cardiac muscles, identified in a complex composed of FSD2, CMYA5 and RYR2. Post-translationally, phosphorylated by PKA. In terms of tissue distribution, expressed in skin as well as in cardiac muscle. Expressed in skeletal muscle (at protein level).

It localises to the nucleus. The protein localises to the cytoplasm. Its subcellular location is the perinuclear region. The protein resides in the myofibril. It is found in the sarcomere. It localises to the m line. The protein localises to the sarcoplasmic reticulum. Its function is as follows. May serve as an anchoring protein that mediates the subcellular compartmentation of protein kinase A (PKA) via binding to PRKAR2A. May attenuate calcineurin ability to induce slow-fiber gene program in muscle and may negatively modulate skeletal muscle regeneration. Plays a role in the assembly of ryanodine receptor (RYR2) clusters in striated muscle. This is Cardiomyopathy-associated protein 5 (Cmya5) from Mus musculus (Mouse).